The chain runs to 181 residues: MSDSRLVKISKYLSKYLRHTPDAIGIKLAPGGWVAVDELITACAKNKFPITRQELEAVVESSEKQRFSFDSTGTLIRANQGHSVEVDLQLEPVVPPDELYHGTGHKSVDSIMETGLCKMSRHHVHLSKDIATAQTVGARHGKPVVFAISAAAMHQAGYIFYCSDNGVWLVDRVPPEYLQKI.

Belongs to the KptA/TPT1 family.

In terms of biological role, removes the 2'-phosphate from RNA via an intermediate in which the phosphate is ADP-ribosylated by NAD followed by a presumed transesterification to release the RNA and generate ADP-ribose 1''-2''-cyclic phosphate (APPR&gt;P). May function as an ADP-ribosylase. In Nostoc punctiforme (strain ATCC 29133 / PCC 73102), this protein is Probable RNA 2'-phosphotransferase.